Reading from the N-terminus, the 283-residue chain is 4-diphosphocytidyl-2-C-methyl-D-erythritol kinase (283 aa).

The active site involves Lys-12. 94–104 (PAQAGLGGGSS) lines the ATP pocket. Asp-136 is a catalytic residue.

Belongs to the GHMP kinase family. IspE subfamily.

It catalyses the reaction 4-CDP-2-C-methyl-D-erythritol + ATP = 4-CDP-2-C-methyl-D-erythritol 2-phosphate + ADP + H(+). The protein operates within isoprenoid biosynthesis; isopentenyl diphosphate biosynthesis via DXP pathway; isopentenyl diphosphate from 1-deoxy-D-xylulose 5-phosphate: step 3/6. Its function is as follows. Catalyzes the phosphorylation of the position 2 hydroxy group of 4-diphosphocytidyl-2C-methyl-D-erythritol. The chain is 4-diphosphocytidyl-2-C-methyl-D-erythritol kinase from Acidovorax sp. (strain JS42).